We begin with the raw amino-acid sequence, 360 residues long: N6-Methyl-AMP deaminase (360 aa).

2 residues coordinate Zn(2+): histidine 23 and histidine 25. Residues histidine 25, asparagine 27, histidine 73, 105–108 (STPR), aspartate 147, and glycine 180 contribute to the N(6)-methyl-AMP site. A Zn(2+)-binding site is contributed by histidine 207. Glutamate 210, aspartate 292, and aspartate 293 together coordinate N(6)-methyl-AMP. Glutamate 210 (proton donor) is an active-site residue. Aspartate 292 is a Zn(2+) binding site.

Belongs to the metallo-dependent hydrolases superfamily. Adenosine and AMP deaminases family. As to quaternary structure, monomer. Requires Zn(2+) as cofactor.

The catalysed reaction is N(6)-methyl-AMP + H2O + H(+) = IMP + methylamine. Catalyzes the hydrolysis of the free cytosolic methylated adenosine nucleotide N(6)-methyl-AMP (N6-mAMP) to produce inositol monophosphate (IMP) and methylamine. Is required for the catabolism of cytosolic N6-mAMP, which is derived from the degradation of mRNA containing N6-methylated adenine (m6A). This chain is N6-Methyl-AMP deaminase (Mapda), found in Mus musculus (Mouse).